The primary structure comprises 81 residues: Centromere protein X (81 aa).

Residue Met-1 is modified to N-acetylmethionine.

It belongs to the CENP-X/MHF2 family. Heterodimer with CENPX, sometimes called MHF; this interaction stabilizes both partners. MHF heterodimers can assemble to form tetrameric structures. MHF also coassemble with CENPT-CENPW heterodimers at centromeres to form the tetrameric CENP-T-W-S-X complex. Forms a discrete complex with FANCM and CENPX, called FANCM-MHF; this interaction, probably mediated by direct binding between CENPS and FANCM, leads to synergistic activation of double-stranded DNA binding and strongly stimulates FANCM-mediated DNA remodeling. Recruited by FANCM to the Fanconi anemia (FA) core complex, which consists of CENPS, CENPX, FANCA, FANCB, FANCC, FANCE, FANCF, FANCG, FANCL, FANCM, FAAP24 and FAAP100. The FA core complex associates with Bloom syndrome (BLM) complex, which consists of at least BLM, DNA topoisomerase 3-alpha (TOP3A), RMI1/BLAP75, RPA1/RPA70 and RPA2/RPA32. The super complex between FA and BLM is called BRAFT.

It localises to the nucleus. The protein localises to the chromosome. The protein resides in the centromere. Its subcellular location is the kinetochore. In terms of biological role, DNA-binding component of the Fanconi anemia (FA) core complex. Required for the normal activation of the FA pathway, leading to monoubiquitination of the FANCI-FANCD2 complex in response to DNA damage, cellular resistance to DNA cross-linking drugs, and prevention of chromosomal breakage. In complex with CENPS (MHF heterodimer), crucial cofactor for FANCM in both binding and ATP-dependent remodeling of DNA. Stabilizes FANCM. In complex with CENPS and FANCM (but not other FANC proteins), rapidly recruited to blocked forks and promotes gene conversion at blocked replication forks. In complex with CENPS, CENPT and CENPW (CENP-T-W-S-X heterotetramer), involved in the formation of a functional kinetochore outer plate, which is essential for kinetochore-microtubule attachment and faithful mitotic progression. As a component of MHF and CENP-T-W-S-X complexes, binds DNA and bends it to form a nucleosome-like structure. DNA-binding function is fulfilled in the presence of CENPS, with the following preference for DNA substates: Holliday junction &gt; double-stranded &gt; splay arm &gt; single-stranded. Does not bind DNA on its own. In Homo sapiens (Human), this protein is Centromere protein X (CENPX).